Here is a 1118-residue protein sequence, read N- to C-terminus: Sodium-driven chloride bicarbonate exchanger (1118 aa).

2 disordered regions span residues 1–23 (MEIK…EEAV) and 58–97 (GRKS…TPSQ). Residues 1–509 (MEIKDQGAQM…DFRDAFSLQC (509 aa)) are Cytoplasmic-facing. The span at 59–76 (RKSHRRHRHRGHKHRKRD) shows a compositional bias: basic residues. Residues 77-90 (RERDSGLEDGRESP) are compositionally biased toward basic and acidic residues. Position 89 is a phosphoserine (Ser-89). Thr-94 carries the phosphothreonine modification. Zn(2+) contacts are provided by His-221 and His-223. Disordered regions lie at residues 269-310 (AENK…KGPP) and 457-476 (NGTA…GPEL). Phosphoserine is present on Ser-276. Residues 510–530 (LASFLFLYCACMSPVITFGGL) traverse the membrane as a helical segment. Residues 531-538 (LGEATEGR) lie on the Extracellular side of the membrane. A helical transmembrane segment spans residues 539–559 (ISAIESLFGASMTGIAYSLFG). Topologically, residues 560–562 (GQP) are cytoplasmic. The chain crosses the membrane as a helical span at residues 563–583 (LTILGSTGPVLVFEKILFKFC). Residues 584–596 (KEYGLSYLSLRAS) lie on the Extracellular side of the membrane. The helical transmembrane segment at 597–617 (IGLWTATLCIILVATDASSLV) threads the bilayer. Residues 618-626 (CYITRFTEE) are Cytoplasmic-facing. A helical membrane pass occupies residues 627–647 (AFASLICIIFIYEALEKLFEL). Residues 648 to 720 (SETYPINMHN…VGRACGHGHP (73 aa)) are Extracellular-facing. N-linked (GlcNAc...) asparagine glycosylation is found at Asn-677, Asn-687, and Asn-697. Residues 721-741 (YVPDVLFWSVILFFSTVTMSA) form a helical membrane-spanning segment. At 742–762 (TLKQFKTSRYFPTKVRSIVSD) the chain is on the cytoplasmic side. A helical transmembrane segment spans residues 763 to 783 (FAVFLTILCMVLIDYAIGIPS). Residues 784 to 809 (PKLQVPSVFKPTRDDRGWFVTPLGPN) are Extracellular-facing. Residues 810–830 (PWWTIIAAIIPALLCTILIFM) form a helical membrane-spanning segment. Over 831 to 855 (DQQITAVIINRKEHKLKKGCGYHLD) the chain is Cytoplasmic. The helical transmembrane segment at 856-876 (LLMVAVMLGVCSIMGLPWFVA) threads the bilayer. Over 877 to 912 (ATVLSITHVNSLKLESECSAPGEQPKFLGIREQRVT) the chain is Extracellular. Residues 913–933 (GLMIFILMGSSVFMTSILKFI) form a helical membrane-spanning segment. The Cytoplasmic portion of the chain corresponds to 934–935 (PM). A helical transmembrane segment spans residues 936–956 (PVLYGVFLYMGASSLKGIQLF). The Extracellular segment spans residues 957–998 (DRIKLFWMPAKHQPDFIYLRHVPLRKVHLFTVIQMSCLGLLW). The chain crosses the membrane as a helical span at residues 999-1019 (IIKVSRAAIVFPMMVLALVFV). Over 1020-1118 (RKLMDFLFTK…SRFPSKSSPS (99 aa)) the chain is Cytoplasmic. A phosphoserine mark is found at Ser-1057 and Ser-1085.

This sequence belongs to the anion exchanger (TC 2.A.31) family. In terms of processing, N-glycosylated. In the brain, detected in cerebral cortex, subcortex, cerebellum, hippocampus and medulla (at protein level). In the cerebrum, expressed at high levels throughout the cortex, at lower levels in striatum and not detectable in the corpus callosum (at protein level). In the cerebellum, detected at high levels in the molecular layer but at very low levels in the granular layer (at protein level). In the central nervous system, detected in neurons in the olfactory bulb, cortex and cerebellum (at protein level). Within the hippocampus, abundantly expressed in CA3 pyramidal cells (at protein level). Strongly expressed in the retina with high levels in bipolar and amacrine cells (at protein level). Expressed in the epithelial cells of the choroid plexus. During embryonic development, expressed in neurons of the central nervous system. Also expressed in the peripheral nervous system and in non-neuronal tissues such as the dura and some epithelia including the acid-secreting epithelium of the stomach and the duodenal epithelium. In the embryonic retina, expression is restricted to the neuronal cell layer and the retinal pigment epithelium. In terms of tissue distribution, expressed at high levels in brain and at low levels in the pituitary, testis, kidney and ileum. Also expressed in pancreatic islets.

It localises to the basolateral cell membrane. The protein localises to the apical cell membrane. Its subcellular location is the cell projection. It is found in the dendrite. The protein resides in the axon. It localises to the perikaryon. The protein localises to the presynapse. Its subcellular location is the postsynapse. It carries out the reaction 2 hydrogencarbonate(out) + chloride(in) + Na(+)(out) = 2 hydrogencarbonate(in) + chloride(out) + Na(+)(in). With respect to regulation, zinc-binding negatively regulates its activity. Its function is as follows. Sodium/bicarbonate cotransporter which plays an important role in regulating intracellular pH. Has been shown to act as a sodium/bicarbonate cotransporter in exchange for intracellular chloride. Has also been shown to act as a sodium/biocarbonate cotransporter which is not responsible for net efflux of chloride, with the observed chloride efflux being due to chloride self-exchange. Controls neuronal pH and may contribute to the secretion of cerebrospinal fluid. Acting on presynaptic intracellular pH, it promotes GABA release, reduces the excitability of CA1 pyramidal neurons, and modulates short-term synaptic plasticity. Required in retinal cells to maintain normal pH which is necessary for normal vision. In the kidney, likely to mediate bicarbonate reclamation in the apical membrane of the proximal tubules. Sodium/bicarbonate cotransporter which mediates cotransport of sodium and bicarbonate in association with an efflux of intracellular chloride. The protein is Sodium-driven chloride bicarbonate exchanger of Mus musculus (Mouse).